The sequence spans 514 residues: Developmental and secondary metabolism regulator veA (514 aa).

A Velvet domain is found at 26 to 218 (NRHLWYQLTV…ADQGCHVRIR (193 aa)). The short motif at 40–45 (ERARAC) is the Nuclear localization signal element. The interval 219 to 463 (RDVRMRKRDA…PIGSKRKHDQ (245 aa)) is disordered. The span at 228–243 (AKSNNGRDRREDDMAR) shows a compositional bias: basic and acidic residues. Residues 256-267 (SAAARARSMSNS) are compositionally biased toward low complexity. Polar residues predominate over residues 386 to 396 (SYPSTPVSSHP). The interval 411 to 448 (KSPSNSVSPSNSSLKITDLLVQPLPSSEPKLEVGSAPC) is PEST. Residues 412–423 (SPSNSVSPSNSS) show a composition bias toward low complexity.

It belongs to the velvet family. VeA subfamily. Component of the heterotrimeric velvet complex composed of laeA, veA and velB; VeA acting as a bridging protein between laeA and velB.

It localises to the nucleus. Its subcellular location is the cytoplasm. Its function is as follows. Component of the velvet transcription factor complex that controls sexual/asexual developmental ratio in response to light, promoting sexual development in the darkness while stimulating asexual sporulation under illumination. The velvet complex hat acts as a global regulator for secondary metabolite gene expression. Controls the expression of the cephalosporin C gene cluster. Regulates hyphal fragmentation. In Hapsidospora chrysogenum (strain ATCC 11550 / CBS 779.69 / DSM 880 / IAM 14645 / JCM 23072 / IMI 49137) (Acremonium chrysogenum), this protein is Developmental and secondary metabolism regulator veA.